A 433-amino-acid chain; its full sequence is Zinc carboxypeptidase A 1 (433 aa).

Positions 1 to 28 (MVRLNSAAGSRWWAPAMAILAVALSVEA) are cleaved as a signal peptide. One can recognise a Peptidase M14 domain in the interval 130 to 423 (DYHTLEEIHA…DSLITLLEES (294 aa)). The Zn(2+) site is built by H187 and E190. A disulfide bridge connects residues C253 and C276. Residue H312 coordinates Zn(2+). E387 acts as the Proton donor/acceptor in catalysis.

The protein belongs to the peptidase M14 family. Requires Zn(2+) as cofactor. Expressed in the posterior midgut in pupae and female adults.

It is found in the secreted. Functionally, involved in the digestion of the blood meal. The sequence is that of Zinc carboxypeptidase A 1 from Anopheles gambiae (African malaria mosquito).